The following is a 322-amino-acid chain: NADH-cytochrome b5 reductase 2 (322 aa).

Residues 32 to 48 (LAPIYISVGLAGLGVGL) traverse the membrane as a helical segment. In terms of domain architecture, FAD-binding FR-type spans 72–176 (QGWVDLKLSE…KGPIPKYPWE (105 aa)). 179–214 (KHKHICLIAGGTGITPMYQLARQIFKNPEDQTKVTL) serves as a coordination point for FAD.

This sequence belongs to the flavoprotein pyridine nucleotide cytochrome reductase family. FAD serves as cofactor.

The protein localises to the mitochondrion outer membrane. It catalyses the reaction 2 Fe(III)-[cytochrome b5] + NADH = 2 Fe(II)-[cytochrome b5] + NAD(+) + H(+). May mediate the reduction of outer membrane cytochrome b5. The polypeptide is NADH-cytochrome b5 reductase 2 (mcr1) (Aspergillus clavatus (strain ATCC 1007 / CBS 513.65 / DSM 816 / NCTC 3887 / NRRL 1 / QM 1276 / 107)).